A 334-amino-acid polypeptide reads, in one-letter code: Ornithine carbamoyltransferase (334 aa).

Residues 56–59 (STRT), Q83, R107, and 134–137 (HPTQ) each bind carbamoyl phosphate. Residues N168, D232, and 236-237 (SM) contribute to the L-ornithine site. Carbamoyl phosphate is bound by residues 274-275 (CL) and R320.

It belongs to the aspartate/ornithine carbamoyltransferase superfamily. OTCase family.

The protein localises to the cytoplasm. It catalyses the reaction carbamoyl phosphate + L-ornithine = L-citrulline + phosphate + H(+). It participates in amino-acid biosynthesis; L-arginine biosynthesis; L-arginine from L-ornithine and carbamoyl phosphate: step 1/3. Reversibly catalyzes the transfer of the carbamoyl group from carbamoyl phosphate (CP) to the N(epsilon) atom of ornithine (ORN) to produce L-citrulline. The sequence is that of Ornithine carbamoyltransferase from Shigella dysenteriae serotype 1 (strain Sd197).